The following is a 398-amino-acid chain: Arylacetamide deacetylase (398 aa).

The Cytoplasmic portion of the chain corresponds to 1–5; that stretch reads MGRTI. Residues 6–26 traverse the membrane as a helical; Signal-anchor for type II membrane protein segment; it reads FLLISVVLVAYYIYIPLPDDI. Topologically, residues 27 to 398 are lumenal; that stretch reads EEPWKIILGN…QYLNWLHKNL (372 aa). N77 is a glycosylation site (N-linked (GlcNAc...) asparagine). The short motif at 110–112 is the Involved in the stabilization of the negatively charged intermediate by the formation of the oxyanion hole element; it reads HGG. A disulfide bridge links C115 with C339. S188 is a catalytic residue. N-linked (GlcNAc...) asparagine glycosylation is found at N192, N281, and N324. Catalysis depends on residues D342 and H372.

Belongs to the 'GDXG' lipolytic enzyme family. In terms of tissue distribution, highest levels in liver with lower levels in jejunum, kidney and testis.

It localises to the endoplasmic reticulum membrane. It is found in the microsome membrane. The catalysed reaction is a triacylglycerol + H2O = a diacylglycerol + a fatty acid + H(+). Functionally, displays cellular triglyceride lipase activity in liver, increases the levels of intracellular fatty acids derived from the hydrolysis of newly formed triglyceride stores and plays a role in very low-density lipoprotein assembly. Displays serine esterase activity in liver. Deacetylates a variety of arylacetamide substrates, including xenobiotic compounds and procarcinogens, converting them to the primary arylamide compounds and increasing their toxicity. This is Arylacetamide deacetylase (Aadac) from Rattus norvegicus (Rat).